Consider the following 236-residue polypeptide: Ribosome maturation protein SDO1 homolog (236 aa).

This sequence belongs to the SDO1/SBDS family. Crystallized in association with 70S ribosomes.

In Thermococcus kodakarensis (strain ATCC BAA-918 / JCM 12380 / KOD1) (Pyrococcus kodakaraensis (strain KOD1)), this protein is Ribosome maturation protein SDO1 homolog.